A 492-amino-acid polypeptide reads, in one-letter code: Katanin p60 ATPase-containing subunit A1 (492 aa).

The disordered stretch occupies residues 80–186; the sequence is STPPKASQQE…ESEPKKFDST (107 aa). Basic and acidic residues predominate over residues 145–171; the sequence is PNDKGKAVRGREKKDQQNKGKEEKSKS. 250–257 lines the ATP pocket; it reads GPPGTGKT.

Belongs to the AAA ATPase family. Katanin p60 subunit A1 subfamily. As to quaternary structure, can homooligomerize into hexameric rings, which may be promoted by interaction with microtubules. Interacts with KATNB1, which may serve as a targeting subunit.

It localises to the cytoplasm. The protein localises to the cytoskeleton. Its subcellular location is the microtubule organizing center. The protein resides in the centrosome. It is found in the spindle pole. It localises to the spindle. The catalysed reaction is n ATP + n H2O + a microtubule = n ADP + n phosphate + (n+1) alpha/beta tubulin heterodimers.. With respect to regulation, ATPase activity is stimulated by microtubules, which promote homooligomerization. ATP-dependent microtubule severing is stimulated by interaction with KATNB1. Functionally, catalytic subunit of a complex which severs microtubules in an ATP-dependent manner. Microtubule severing may promote rapid reorganization of cellular microtubule arrays and the release of microtubules from the centrosome following nucleation. The chain is Katanin p60 ATPase-containing subunit A1 from Gallus gallus (Chicken).